We begin with the raw amino-acid sequence, 249 residues long: Meiotic drive suppressor wtf25 (249 aa).

Positions Met-1–Gly-40 are disordered. Basic and acidic residues predominate over residues Lys-19–Pro-30. A run of 4 helical transmembrane segments spans residues Leu-73–Cys-93, Trp-110–Phe-130, Asn-151–Glu-170, and Ser-187–Val-207.

It belongs to the WTF family. In terms of assembly, homomer. Interacts with other proteins that exhibit high sequence similarity.

It is found in the spore membrane. The protein localises to the vacuole membrane. Functionally, acts as a suppressor component of the dual wtf meiotic drive system, and can suppress but not confer meiotic drive by compatible poisons. Wtf meiotic drive systems promote unequal transmission of alleles from the parental zygote to progeny spores by encoding a poison and an antidote from the same locus; the poison is trans-acting and forms toxic aggregates in all spores within an ascus, wherease the antidote is spore-specific and targets aggregates for degradation by the vacuole. Meiotic drive by wtf systems therefore lead to poisoning of all progeny that do not inherit the dual poison/antidote allele, or express a compatible antidote. The protein is Meiotic drive suppressor wtf25 of Schizosaccharomyces pombe (strain 972 / ATCC 24843) (Fission yeast).